A 922-amino-acid chain; its full sequence is 1,4-alpha-glucan-branching enzyme 1, chloroplastic/amyloplastic (922 aa).

A chloroplast-targeting transit peptide spans 1-47; sequence MVYTISGIRFPVLPSLHKSTLRCDRRASSHSFFLKNNSSSFSRTSLY. Residues 83 to 130 form a disordered region; it reads LENPDITSEDAQNLEDLTMKDGNKYNIDESTSSYREVGDEKGSVTSSS. Basic and acidic residues predominate over residues 99 to 109; sequence LTMKDGNKYNI. Asp494 acts as the Nucleophile in catalysis. The active-site Proton donor is the Glu549. The segment at 870–922 is disordered; the sequence is VESEPIELSVEEAESEPIERSVEEVESETTQQSVEVESETTQQSVEVESETTQ. A compositionally biased stretch (low complexity) spans 897–922; it reads ETTQQSVEVESETTQQSVEVESETTQ.

It belongs to the glycosyl hydrolase 13 family. GlgB subfamily. As to quaternary structure, monomer. Expressed in roots, leaves, stipules, pods and flowers.

It is found in the plastid. Its subcellular location is the chloroplast. The protein localises to the amyloplast. It catalyses the reaction Transfers a segment of a (1-&gt;4)-alpha-D-glucan chain to a primary hydroxy group in a similar glucan chain.. It participates in glycan biosynthesis; starch biosynthesis. Catalyzes the formation of the alpha-1,6-glucosidic linkages in starch by scission of a 1,4-alpha-linked oligosaccharide from growing alpha-1,4-glucan chains and the subsequent attachment of the oligosaccharide to the alpha-1,6 position. May preferentially transfer short chains during branching. Responsible for the synthesis of about 75% of the amylopectin found in the starch granules of mature embryos. The sequence is that of 1,4-alpha-glucan-branching enzyme 1, chloroplastic/amyloplastic (SBEI) from Pisum sativum (Garden pea).